The primary structure comprises 461 residues: ADP-specific phosphofructokinase (461 aa).

Residues 1–457 (MVRELLEKAR…FTSYLAMLKE (457 aa)) form the ADPK domain. Mg(2+)-binding residues include glutamate 268, glutamate 298, and aspartate 441. Aspartate 441 functions as the Proton acceptor in the catalytic mechanism.

The protein belongs to the carbohydrate kinase PfkC family. Requires Mg(2+) as cofactor.

The protein resides in the cytoplasm. It carries out the reaction beta-D-fructose 6-phosphate + ADP = beta-D-fructose 1,6-bisphosphate + AMP + H(+). The protein operates within carbohydrate degradation; glycolysis. In terms of biological role, catalyzes the phosphorylation of fructose 6-phosphate to fructose 1,6-bisphosphate using ADP as the phosphate donor. The polypeptide is ADP-specific phosphofructokinase (Thermococcus kodakarensis (strain ATCC BAA-918 / JCM 12380 / KOD1) (Pyrococcus kodakaraensis (strain KOD1))).